Consider the following 149-residue polypeptide: D-aminoacyl-tRNA deacylase (149 aa).

A Gly-cisPro motif, important for rejection of L-amino acids motif is present at residues 137 to 138 (GP).

This sequence belongs to the DTD family. As to quaternary structure, homodimer.

The protein resides in the cytoplasm. The catalysed reaction is glycyl-tRNA(Ala) + H2O = tRNA(Ala) + glycine + H(+). The enzyme catalyses a D-aminoacyl-tRNA + H2O = a tRNA + a D-alpha-amino acid + H(+). An aminoacyl-tRNA editing enzyme that deacylates mischarged D-aminoacyl-tRNAs. Also deacylates mischarged glycyl-tRNA(Ala), protecting cells against glycine mischarging by AlaRS. Acts via tRNA-based rather than protein-based catalysis; rejects L-amino acids rather than detecting D-amino acids in the active site. By recycling D-aminoacyl-tRNA to D-amino acids and free tRNA molecules, this enzyme counteracts the toxicity associated with the formation of D-aminoacyl-tRNA entities in vivo and helps enforce protein L-homochirality. This Alkaliphilus metalliredigens (strain QYMF) protein is D-aminoacyl-tRNA deacylase.